The chain runs to 643 residues: UvrABC system protein C (643 aa).

The region spanning Ala-25–Val-104 is the GIY-YIG domain. Positions Ser-214–Leu-249 constitute a UVR domain.

It belongs to the UvrC family. Interacts with UvrB in an incision complex.

The protein localises to the cytoplasm. Functionally, the UvrABC repair system catalyzes the recognition and processing of DNA lesions. UvrC both incises the 5' and 3' sides of the lesion. The N-terminal half is responsible for the 3' incision and the C-terminal half is responsible for the 5' incision. The chain is UvrABC system protein C from Synechococcus elongatus (strain ATCC 33912 / PCC 7942 / FACHB-805) (Anacystis nidulans R2).